Reading from the N-terminus, the 275-residue chain is Adenosylcobinamide-GDP ribazoletransferase (275 aa).

6 consecutive transmembrane segments (helical) span residues valine 52–glycine 72, valine 73–methionine 93, methionine 126–valine 146, phenylalanine 181–leucine 201, valine 208–alanine 228, and isoleucine 251–alanine 271.

Belongs to the CobS family. Mg(2+) serves as cofactor.

It is found in the cell membrane. It catalyses the reaction alpha-ribazole + adenosylcob(III)inamide-GDP = adenosylcob(III)alamin + GMP + H(+). The catalysed reaction is alpha-ribazole 5'-phosphate + adenosylcob(III)inamide-GDP = adenosylcob(III)alamin 5'-phosphate + GMP + H(+). Its pathway is cofactor biosynthesis; adenosylcobalamin biosynthesis; adenosylcobalamin from cob(II)yrinate a,c-diamide: step 7/7. Joins adenosylcobinamide-GDP and alpha-ribazole to generate adenosylcobalamin (Ado-cobalamin). Also synthesizes adenosylcobalamin 5'-phosphate from adenosylcobinamide-GDP and alpha-ribazole 5'-phosphate. The chain is Adenosylcobinamide-GDP ribazoletransferase from Corynebacterium efficiens (strain DSM 44549 / YS-314 / AJ 12310 / JCM 11189 / NBRC 100395).